The following is a 558-amino-acid chain: Formate--tetrahydrofolate ligase (558 aa).

66–73 contacts ATP; the sequence is TPAGEGKT.

The protein belongs to the formate--tetrahydrofolate ligase family.

It carries out the reaction (6S)-5,6,7,8-tetrahydrofolate + formate + ATP = (6R)-10-formyltetrahydrofolate + ADP + phosphate. It functions in the pathway one-carbon metabolism; tetrahydrofolate interconversion. The protein is Formate--tetrahydrofolate ligase of Neisseria meningitidis serogroup C (strain 053442).